A 97-amino-acid polypeptide reads, in one-letter code: Aspartyl/glutamyl-tRNA(Asn/Gln) amidotransferase subunit C (97 aa).

It belongs to the GatC family. As to quaternary structure, heterotrimer of A, B and C subunits.

The catalysed reaction is L-glutamyl-tRNA(Gln) + L-glutamine + ATP + H2O = L-glutaminyl-tRNA(Gln) + L-glutamate + ADP + phosphate + H(+). The enzyme catalyses L-aspartyl-tRNA(Asn) + L-glutamine + ATP + H2O = L-asparaginyl-tRNA(Asn) + L-glutamate + ADP + phosphate + 2 H(+). In terms of biological role, allows the formation of correctly charged Asn-tRNA(Asn) or Gln-tRNA(Gln) through the transamidation of misacylated Asp-tRNA(Asn) or Glu-tRNA(Gln) in organisms which lack either or both of asparaginyl-tRNA or glutaminyl-tRNA synthetases. The reaction takes place in the presence of glutamine and ATP through an activated phospho-Asp-tRNA(Asn) or phospho-Glu-tRNA(Gln). This Parasynechococcus marenigrum (strain WH8102) protein is Aspartyl/glutamyl-tRNA(Asn/Gln) amidotransferase subunit C.